The primary structure comprises 624 residues: uncharacterized protein (624 aa).

Residues 108 to 138 (PTAWSGMESDSTASERSLPQRTDTTSVSSQY) form a disordered region. A Phosphoserine modification is found at serine 112. Residues 115–138 (ESDSTASERSLPQRTDTTSVSSQY) are compositionally biased toward polar residues. A Phosphoserine modification is found at serine 205. Disordered regions lie at residues 217–236 (LMES…PGTR) and 305–329 (KREC…PVSE).

This is an uncharacterized protein from Rattus norvegicus (Rat).